The sequence spans 261 residues: 4-hydroxy-tetrahydrodipicolinate reductase (261 aa).

NAD(+) is bound at residue 9-14 (GCLGRM). An NADP(+)-binding site is contributed by Arg36. NAD(+) contacts are provided by residues 97-99 (GTT) and 118-121 (SANM). The Proton donor/acceptor role is filled by His151. Residue His152 coordinates (S)-2,3,4,5-tetrahydrodipicolinate. Lys155 functions as the Proton donor in the catalytic mechanism. 161–162 (GT) contacts (S)-2,3,4,5-tetrahydrodipicolinate.

The protein belongs to the DapB family.

It localises to the cytoplasm. It catalyses the reaction (S)-2,3,4,5-tetrahydrodipicolinate + NAD(+) + H2O = (2S,4S)-4-hydroxy-2,3,4,5-tetrahydrodipicolinate + NADH + H(+). The enzyme catalyses (S)-2,3,4,5-tetrahydrodipicolinate + NADP(+) + H2O = (2S,4S)-4-hydroxy-2,3,4,5-tetrahydrodipicolinate + NADPH + H(+). The protein operates within amino-acid biosynthesis; L-lysine biosynthesis via DAP pathway; (S)-tetrahydrodipicolinate from L-aspartate: step 4/4. In terms of biological role, catalyzes the conversion of 4-hydroxy-tetrahydrodipicolinate (HTPA) to tetrahydrodipicolinate. The sequence is that of 4-hydroxy-tetrahydrodipicolinate reductase from Wolbachia sp. subsp. Drosophila simulans (strain wRi).